The primary structure comprises 134 residues: Agouti-related protein (134 aa).

Positions 1 to 20 are cleaved as a signal peptide; that stretch reads MLTTMLLSCALLLAMPTMLG. A propeptide spanning residues 21–84 is cleaved from the precursor; the sequence is AQIGLAPLEG…VLDPEGRKAR (64 aa). Cystine bridges form between C89-C104, C96-C110, C103-C121, C107-C131, and C112-C119. One can recognise an Agouti domain in the interval 89–131; it reads CVRLHESCLGHQVPCCDPCATCYCRFFNAFCYCRKLGTATNPC. An interaction with melanocortin receptors region spans residues 113–115; it reads RFF.

In terms of assembly, interacts with melanocortin receptors MC3R, MC4R and MC5R.

Its subcellular location is the secreted. The protein localises to the golgi apparatus lumen. In terms of biological role, plays a role in weight homeostasis. Involved in the control of feeding behavior through the central melanocortin system. Acts as alpha melanocyte-stimulating hormone antagonist by inhibiting cAMP production mediated by stimulation of melanocortin receptors within the hypothalamus and adrenal gland. Has very low activity with MC5R. Is an inverse agonist for MC3R and MC4R being able to suppress their constitutive activity. It promotes MC3R and MC4R endocytosis in an arrestin-dependent manner. This Sus scrofa (Pig) protein is Agouti-related protein (AGRP).